The chain runs to 117 residues: MLLEKAYRIKKNADFQRIYKKGHSVANRQFVVYTCNNKEIDHFRLGISVSKKLGNAVLRNKIKRAIRENFKVHKSHILAKDIIVIARQPAKDMTTLQIQNSLEHVLKIAKVFNKKIK.

It belongs to the RnpA family. As to quaternary structure, consists of a catalytic RNA component (M1 or rnpB) and a protein subunit.

The enzyme catalyses Endonucleolytic cleavage of RNA, removing 5'-extranucleotides from tRNA precursor.. In terms of biological role, RNaseP catalyzes the removal of the 5'-leader sequence from pre-tRNA to produce the mature 5'-terminus. It can also cleave other RNA substrates such as 4.5S RNA. The protein component plays an auxiliary but essential role in vivo by binding to the 5'-leader sequence and broadening the substrate specificity of the ribozyme. This Staphylococcus aureus (strain MW2) protein is Ribonuclease P protein component.